The sequence spans 246 residues: Probable transcriptional regulatory protein RB5500 (246 aa).

Belongs to the TACO1 family.

The protein resides in the cytoplasm. The chain is Probable transcriptional regulatory protein RB5500 from Rhodopirellula baltica (strain DSM 10527 / NCIMB 13988 / SH1).